The primary structure comprises 576 residues: Arginine--tRNA ligase (576 aa).

The short motif at 122 to 132 (PNVAKEMHVGH) is the 'HIGH' region element.

This sequence belongs to the class-I aminoacyl-tRNA synthetase family. Monomer.

The protein localises to the cytoplasm. The catalysed reaction is tRNA(Arg) + L-arginine + ATP = L-arginyl-tRNA(Arg) + AMP + diphosphate. This is Arginine--tRNA ligase from Pectobacterium atrosepticum (strain SCRI 1043 / ATCC BAA-672) (Erwinia carotovora subsp. atroseptica).